A 391-amino-acid chain; its full sequence is 4-hydroxy-3-methylbut-2-en-1-yl diphosphate synthase (flavodoxin) (391 aa).

Residues Cys-286, Cys-289, Cys-321, and Glu-328 each coordinate [4Fe-4S] cluster.

The protein belongs to the IspG family. It depends on [4Fe-4S] cluster as a cofactor.

It carries out the reaction (2E)-4-hydroxy-3-methylbut-2-enyl diphosphate + oxidized [flavodoxin] + H2O + 2 H(+) = 2-C-methyl-D-erythritol 2,4-cyclic diphosphate + reduced [flavodoxin]. It participates in isoprenoid biosynthesis; isopentenyl diphosphate biosynthesis via DXP pathway; isopentenyl diphosphate from 1-deoxy-D-xylulose 5-phosphate: step 5/6. Converts 2C-methyl-D-erythritol 2,4-cyclodiphosphate (ME-2,4cPP) into 1-hydroxy-2-methyl-2-(E)-butenyl 4-diphosphate. This chain is 4-hydroxy-3-methylbut-2-en-1-yl diphosphate synthase (flavodoxin), found in Corynebacterium diphtheriae (strain ATCC 700971 / NCTC 13129 / Biotype gravis).